The primary structure comprises 464 residues: Macrophage metalloelastase (464 aa).

A signal peptide spans 1–17 (MKFLLLILTLWVTSSGA). Residues 18 to 100 (DPLKENDMLF…DVYHFKTMPG (83 aa)) constitute a propeptide, activation peptide. Asn-69 carries an N-linked (GlcNAc...) asparagine glycan. The Cysteine switch motif lies at 85 to 92 (PRCGVPDV). Cys-87 is a binding site for Zn(2+). Positions 119 and 153 each coordinate Ca(2+). His-163 and Asp-165 together coordinate Zn(2+). Ca(2+) contacts are provided by Asp-170, Gly-171, Gly-173, and Val-175. His-178 contributes to the Zn(2+) binding site. Positions 185, 187, and 189 each coordinate Ca(2+). His-191 contacts Zn(2+). Asp-193, Glu-194, and Glu-196 together coordinate Ca(2+). His-213 is a binding site for Zn(2+). Glu-214 is a catalytic residue. Positions 217 and 223 each coordinate Zn(2+). 4 Hemopexin repeats span residues 274–323 (PTAC…WPTL), 324–370 (PSGI…GFPD), 372–420 (VKKI…FPGI), and 421–464 (GPKI…WFDC). Cysteines 277 and 464 form a disulfide. The Ca(2+) site is built by Asp-284, Glu-328, Asp-376, and Asp-425.

It belongs to the peptidase M10A family. It depends on Ca(2+) as a cofactor. Zn(2+) serves as cofactor.

It is found in the secreted. The protein resides in the extracellular space. It localises to the extracellular matrix. The enzyme catalyses Hydrolysis of soluble and insoluble elastin. Specific cleavages are also produced at 14-Ala-|-Leu-15 and 16-Tyr-|-Leu-17 in the B chain of insulin.. In terms of biological role, may be involved in tissue injury and remodeling. Has significant elastolytic activity. Can accept large and small amino acids at the P1' site, but has a preference for leucine. Aromatic or hydrophobic residues are preferred at the P1 site, with small hydrophobic residues (preferably alanine) occupying P3. In Oryctolagus cuniculus (Rabbit), this protein is Macrophage metalloelastase (MMP12).